Here is a 186-residue protein sequence, read N- to C-terminus: dITP/XTP pyrophosphatase (186 aa).

7–12 (TSNPGK) contacts substrate. Glu36 and Asp65 together coordinate Mg(2+). The active-site Proton acceptor is Asp65. Residues Ser66, 140–143 (FGYD), Lys163, and 168–169 (HR) each bind substrate.

The protein belongs to the HAM1 NTPase family. As to quaternary structure, homodimer. Mg(2+) serves as cofactor. The cofactor is Mn(2+).

The enzyme catalyses XTP + H2O = XMP + diphosphate + H(+). It carries out the reaction dITP + H2O = dIMP + diphosphate + H(+). It catalyses the reaction ITP + H2O = IMP + diphosphate + H(+). Functionally, pyrophosphatase that catalyzes the hydrolysis of nucleoside triphosphates to their monophosphate derivatives, with a high preference for the non-canonical purine nucleotides XTP (xanthosine triphosphate), dITP (deoxyinosine triphosphate) and ITP. Seems to function as a house-cleaning enzyme that removes non-canonical purine nucleotides from the nucleotide pool, thus preventing their incorporation into DNA/RNA and avoiding chromosomal lesions. The sequence is that of dITP/XTP pyrophosphatase from Pyrococcus horikoshii (strain ATCC 700860 / DSM 12428 / JCM 9974 / NBRC 100139 / OT-3).